Here is a 457-residue protein sequence, read N- to C-terminus: Cysteine--tRNA ligase (457 aa).

Cys31 serves as a coordination point for Zn(2+). A 'HIGH' region motif is present at residues 33–43 (PTVYNYAHIGN). Zn(2+) is bound by residues Cys211, His236, and Glu240. The short motif at 269–273 (KMSKS) is the 'KMSKS' region element. An ATP-binding site is contributed by Lys272.

The protein belongs to the class-I aminoacyl-tRNA synthetase family. As to quaternary structure, monomer. The cofactor is Zn(2+).

It is found in the cytoplasm. It carries out the reaction tRNA(Cys) + L-cysteine + ATP = L-cysteinyl-tRNA(Cys) + AMP + diphosphate. This chain is Cysteine--tRNA ligase, found in Xanthomonas campestris pv. campestris (strain ATCC 33913 / DSM 3586 / NCPPB 528 / LMG 568 / P 25).